A 512-amino-acid chain; its full sequence is NAD(P)H-quinone oxidoreductase chain 4, chloroplastic (512 aa).

14 helical membrane-spanning segments follow: residues 4–24 (VPWLTAIVLFPVSAGLLIPLL), 34–54 (WYALGICLLDLILMTYVFGCY), 87–107 (IGLILLTGFVTTLATLAAWPV), 111–131 (PKLFYFLMLAMYSGQLGLFAS), 134–154 (ILLFFVMWELELIPVYLLLSM), 167–187 (FILYTAGGSIFLLAGLLTASL), 208–228 (GLEILIYLGFLIAYAVKLPAF), 242–262 (HYSTCMLLAGILLKMGGYGFI), 274–294 (TVFAPWLVALGAYQIVYAALV), 308–328 (SSVSHMGFVLVGAGSLSDLGL), 330–350 (GAMLQMISHGLIGASLFFLAG), 374–396 (MFAMFTTCAMASLALPGMSGFVS), 417–437 (IITLIEAVGIILTPIYLLSMV), and 462–482 (VFVLGSLLLPMIGIGIYPNFA).

The protein belongs to the complex I subunit 4 family.

It localises to the plastid. It is found in the chloroplast thylakoid membrane. The enzyme catalyses a plastoquinone + NADH + (n+1) H(+)(in) = a plastoquinol + NAD(+) + n H(+)(out). It carries out the reaction a plastoquinone + NADPH + (n+1) H(+)(in) = a plastoquinol + NADP(+) + n H(+)(out). The protein is NAD(P)H-quinone oxidoreductase chain 4, chloroplastic of Zygnema circumcarinatum (Green alga).